The chain runs to 343 residues: N-acetyl-gamma-glutamyl-phosphate reductase (343 aa).

Cys-147 is a catalytic residue.

The protein belongs to the NAGSA dehydrogenase family. Type 1 subfamily.

Its subcellular location is the cytoplasm. It carries out the reaction N-acetyl-L-glutamate 5-semialdehyde + phosphate + NADP(+) = N-acetyl-L-glutamyl 5-phosphate + NADPH + H(+). The protein operates within amino-acid biosynthesis; L-arginine biosynthesis; N(2)-acetyl-L-ornithine from L-glutamate: step 3/4. Catalyzes the NADPH-dependent reduction of N-acetyl-5-glutamyl phosphate to yield N-acetyl-L-glutamate 5-semialdehyde. The protein is N-acetyl-gamma-glutamyl-phosphate reductase of Listeria monocytogenes serotype 4b (strain F2365).